A 169-amino-acid chain; its full sequence is 2-C-methyl-D-erythritol 2,4-cyclodiphosphate synthase (169 aa).

Residues Asp13 and His15 each coordinate a divalent metal cation. 4-CDP-2-C-methyl-D-erythritol 2-phosphate is bound by residues 13–15 (DVH) and 39–40 (HS). His47 is a binding site for a divalent metal cation. Residues 61-63 (DIG), 66-70 (FPDTD), Phe144, and Arg147 contribute to the 4-CDP-2-C-methyl-D-erythritol 2-phosphate site.

Belongs to the IspF family. As to quaternary structure, homotrimer. A divalent metal cation serves as cofactor.

It carries out the reaction 4-CDP-2-C-methyl-D-erythritol 2-phosphate = 2-C-methyl-D-erythritol 2,4-cyclic diphosphate + CMP. Its pathway is isoprenoid biosynthesis; isopentenyl diphosphate biosynthesis via DXP pathway; isopentenyl diphosphate from 1-deoxy-D-xylulose 5-phosphate: step 4/6. Involved in the biosynthesis of isopentenyl diphosphate (IPP) and dimethylallyl diphosphate (DMAPP), two major building blocks of isoprenoid compounds. Catalyzes the conversion of 4-diphosphocytidyl-2-C-methyl-D-erythritol 2-phosphate (CDP-ME2P) to 2-C-methyl-D-erythritol 2,4-cyclodiphosphate (ME-CPP) with a corresponding release of cytidine 5-monophosphate (CMP). The chain is 2-C-methyl-D-erythritol 2,4-cyclodiphosphate synthase from Cupriavidus pinatubonensis (strain JMP 134 / LMG 1197) (Cupriavidus necator (strain JMP 134)).